The following is a 184-amino-acid chain: Ribosome-recycling factor (184 aa).

Belongs to the RRF family.

Its subcellular location is the cytoplasm. Functionally, responsible for the release of ribosomes from messenger RNA at the termination of protein biosynthesis. May increase the efficiency of translation by recycling ribosomes from one round of translation to another. The protein is Ribosome-recycling factor of Acinetobacter baumannii (strain SDF).